The primary structure comprises 170 residues: Fimbrial protein (170 aa).

The propeptide at 1–7 (MNTLQKG) is leader sequence. Residue F8 is modified to N-methylphenylalanine. The chain crosses the membrane as a helical span at residues 8-28 (FTLIELMIVIAIVGILAAVAL). S70 is a glycosylation site (O-linked (Gal...) serine). The residue at position 100 (S100) is an O-(sn-1-glycerophosphoryl)serine. Cysteines 127 and 163 form a disulfide.

The protein belongs to the N-Me-Phe pilin family. As to quaternary structure, the pili are polar flexible filaments of about 5.4 nanometers diameter and 2.5 micrometers average length; they consist of only a single polypeptide chain arranged in a helical configuration of five subunits per turn in the assembled pilus. In terms of processing, O-linked glycan has been reported to consist either of the Gal(alpha1-3) GlcNAc disaccharide, or the Gal(beta 1-4) Gal(alpha 1-3) 2,4-diacetamido-2,4,6-trideoxyhexose trisaccharide.

It is found in the fimbrium. The protein localises to the membrane. Its function is as follows. Major component of the type IV pilus (T4P) that plays a role in cellular adherence, microcolony formation as well as twitching motility. The chain is Fimbrial protein (pilE) from Neisseria meningitidis serogroup B (strain ATCC BAA-335 / MC58).